The following is a 269-amino-acid chain: 3-methyl-2-oxobutanoate hydroxymethyltransferase (269 aa).

Asp49 and Asp88 together coordinate Mg(2+). 3-methyl-2-oxobutanoate is bound by residues 49 to 50 (DS), Asp88, and Lys118. Glu120 contacts Mg(2+). Glu186 serves as the catalytic Proton acceptor.

The protein belongs to the PanB family. As to quaternary structure, homodecamer; pentamer of dimers. The cofactor is Mg(2+).

It localises to the cytoplasm. It carries out the reaction 3-methyl-2-oxobutanoate + (6R)-5,10-methylene-5,6,7,8-tetrahydrofolate + H2O = 2-dehydropantoate + (6S)-5,6,7,8-tetrahydrofolate. It participates in cofactor biosynthesis; (R)-pantothenate biosynthesis; (R)-pantoate from 3-methyl-2-oxobutanoate: step 1/2. Its function is as follows. Catalyzes the reversible reaction in which hydroxymethyl group from 5,10-methylenetetrahydrofolate is transferred onto alpha-ketoisovalerate to form ketopantoate. This is 3-methyl-2-oxobutanoate hydroxymethyltransferase from Pelobacter propionicus (strain DSM 2379 / NBRC 103807 / OttBd1).